A 201-amino-acid chain; its full sequence is Ribonuclease HII (201 aa).

Residues 10–200 (LIEAGCDEAG…LGDGQLELFS (191 aa)) enclose the RNase H type-2 domain. Residues D16, E17, and D108 each coordinate a divalent metal cation.

This sequence belongs to the RNase HII family. The cofactor is Mn(2+). Requires Mg(2+) as cofactor.

It localises to the cytoplasm. It carries out the reaction Endonucleolytic cleavage to 5'-phosphomonoester.. In terms of biological role, endonuclease that specifically degrades the RNA of RNA-DNA hybrids. This is Ribonuclease HII from Bacteroides fragilis (strain ATCC 25285 / DSM 2151 / CCUG 4856 / JCM 11019 / LMG 10263 / NCTC 9343 / Onslow / VPI 2553 / EN-2).